The primary structure comprises 305 residues: Oligopeptide transport ATP-binding protein OppF (305 aa).

The ABC transporter domain occupies 6–251 (LEIKHLKQHF…PLHPYTKSLL (246 aa)). 42 to 49 (GESGCGKS) contributes to the ATP binding site.

This sequence belongs to the ABC transporter superfamily. As to quaternary structure, the complex is composed of two ATP-binding proteins (OppD and OppF), two transmembrane proteins (OppB and OppC) and a solute-binding protein (OppA).

It is found in the cell membrane. The enzyme catalyses a [peptide](out) + ATP + H2O = a [peptide](in) + ADP + phosphate + H(+). Its function is as follows. Part of the ABC transporter complex OppABCDF involved in the uptake of oligopeptides. Probably responsible for energy coupling to the transport system. Required for genetic competence but not for peptide transport or for sporulation. In Bacillus subtilis (strain 168), this protein is Oligopeptide transport ATP-binding protein OppF.